The following is a 1104-amino-acid chain: Extended synaptotagmin-1 (1104 aa).

Methionine 1 bears the N-acetylmethionine mark. Residues 1–38 (MERSPGEGPSPSPMDQPSAPSDPTDQPPAAHAKPDPGS) lie on the Cytoplasmic side of the membrane. The disordered stretch occupies residues 1–48 (MERSPGEGPSPSPMDQPSAPSDPTDQPPAAHAKPDPGSGGQPAGPGAA). Residues 37 to 47 (GSGGQPAGPGA) show a composition bias toward gly residues. The helical transmembrane segment at 39-59 (GGQPAGPGAAGEALAVLTSFG) threads the bilayer. Topologically, residues 60 to 62 (RRL) are lumenal. A helical membrane pass occupies residues 63-83 (LVLIPVYLAGAVGLSVGFVLF). The Cytoplasmic segment spans residues 84-1104 (GLALYLGWRR…LMDNKDKGSS (1021 aa)). Positions 91 to 116 (WRRVRDEKERSLRAARQLLDDEEQLT) form a coiled coil. One can recognise an SMP-LTD domain in the interval 135–313 (DVEKAEWLNK…LPNRLLVPLV (179 aa)). C2 domains follow at residues 312–433 (LVPD…DDWF), 460–580 (QVLQ…QLSS), 627–751 (SVDA…DEWL), and 777–899 (LEEV…TLSS). Phosphoserine; by CDK5 is present on serine 324. Positions 344, 345, 357, 404, 406, 408, 410, and 411 each coordinate Ca(2+). A disordered region spans residues 617-641 (VDSENPQRGSSVDAPPRPCHTTPDS). Lysine 817 bears the N6-acetyllysine mark. 2 positions are modified to phosphoserine: serine 820 and serine 941. The segment at 924–950 (SHSYSHSSSSLSEEPELSGGPPHITSS) is disordered. The span at 925 to 946 (HSYSHSSSSLSEEPELSGGPPH) shows a compositional bias: low complexity. The residue at position 948 (threonine 948) is a Phosphothreonine. Serine 949 and serine 963 each carry phosphoserine. One can recognise a C2 5 domain in the interval 971 to 1093 (PLGQVKLTLW…DLSQGVARWY (123 aa)). Position 1009 is a phosphotyrosine (tyrosine 1009). Residues 1018-1025 (KNRGTKRR) are required for phosphatidylinositol 4,5-bisphosphate-dependent location at the cell membrane. Residue serine 1034 is modified to Phosphoserine.

It belongs to the extended synaptotagmin family. In terms of assembly, interacts with ESYT2 and ESYT3. Interacts with ADGRD1; inhibiting the G-protein-coupled receptor activity of ADGRD1. Interaction with ADGRD1 is abolished when cytosolic calcium increases, relieving ADGRD1 G-protein-coupled receptor activity. Interacts (phosphorylated form) with SLC2A4. Post-translationally, phosphorylated on Ser residues in insulin-treated adipocytes (in vitro); this promotes interaction with SLC2A4. As to expression, widely expressed.

It is found in the endoplasmic reticulum membrane. Its subcellular location is the cell membrane. Binds calcium (via the C2 domains) and translocates to sites of contact between the endoplasmic reticulum and the cell membrane in response to increased cytosolic calcium levels. Helps tether the endoplasmic reticulum to the cell membrane and promotes the formation of appositions between the endoplasmic reticulum and the cell membrane. Acts as an inhibitor of ADGRD1 G-protein-coupled receptor activity in absence of cytosolic calcium. Binds glycerophospholipids in a barrel-like domain and may play a role in cellular lipid transport. In Homo sapiens (Human), this protein is Extended synaptotagmin-1.